The following is a 154-amino-acid chain: Myoglobin (154 aa).

Positions 2–148 (GLSDGEWHLV…FRNDIAAKYK (147 aa)) constitute a Globin domain. At S4 the chain carries Phosphoserine. Nitrite is bound at residue H65. An O2-binding site is contributed by H65. The residue at position 68 (T68) is a Phosphothreonine. Heme b is bound at residue H94.

Belongs to the globin family. As to quaternary structure, monomeric.

The protein resides in the cytoplasm. The protein localises to the sarcoplasm. The catalysed reaction is Fe(III)-heme b-[protein] + nitric oxide + H2O = Fe(II)-heme b-[protein] + nitrite + 2 H(+). It carries out the reaction H2O2 + AH2 = A + 2 H2O. Functionally, monomeric heme protein which primary function is to store oxygen and facilitate its diffusion within muscle tissues. Reversibly binds oxygen through a pentacoordinated heme iron and enables its timely and efficient release as needed during periods of heightened demand. Depending on the oxidative conditions of tissues and cells, and in addition to its ability to bind oxygen, it also has a nitrite reductase activity whereby it regulates the production of bioactive nitric oxide. Under stress conditions, like hypoxia and anoxia, it also protects cells against reactive oxygen species thanks to its pseudoperoxidase activity. This is Myoglobin (MB) from Halichoerus grypus (Gray seal).